The chain runs to 339 residues: Ketol-acid reductoisomerase (NADP(+)) (339 aa).

The region spanning 1 to 182 (MPNRYYEKDG…GCLKAGVIDT (182 aa)) is the KARI N-terminal Rossmann domain. NADP(+) contacts are provided by residues 25–28 (YGSQ), S51, S53, and 83–86 (DHIQ). H108 is an active-site residue. G134 lines the NADP(+) pocket. The KARI C-terminal knotted domain occupies 183–328 (NFREETESDL…RELREMMTFL (146 aa)). Mg(2+) contacts are provided by D191, E195, E227, and E231. S252 is a binding site for substrate.

Belongs to the ketol-acid reductoisomerase family. The cofactor is Mg(2+).

The catalysed reaction is (2R)-2,3-dihydroxy-3-methylbutanoate + NADP(+) = (2S)-2-acetolactate + NADPH + H(+). It catalyses the reaction (2R,3R)-2,3-dihydroxy-3-methylpentanoate + NADP(+) = (S)-2-ethyl-2-hydroxy-3-oxobutanoate + NADPH + H(+). Its pathway is amino-acid biosynthesis; L-isoleucine biosynthesis; L-isoleucine from 2-oxobutanoate: step 2/4. It participates in amino-acid biosynthesis; L-valine biosynthesis; L-valine from pyruvate: step 2/4. Functionally, involved in the biosynthesis of branched-chain amino acids (BCAA). Catalyzes an alkyl-migration followed by a ketol-acid reduction of (S)-2-acetolactate (S2AL) to yield (R)-2,3-dihydroxy-isovalerate. In the isomerase reaction, S2AL is rearranged via a Mg-dependent methyl migration to produce 3-hydroxy-3-methyl-2-ketobutyrate (HMKB). In the reductase reaction, this 2-ketoacid undergoes a metal-dependent reduction by NADPH to yield (R)-2,3-dihydroxy-isovalerate. The protein is Ketol-acid reductoisomerase (NADP(+)) of Solibacter usitatus (strain Ellin6076).